A 252-amino-acid chain; its full sequence is Triosephosphate isomerase (252 aa).

A substrate-binding site is contributed by 10 to 12; it reads NWK. Catalysis depends on histidine 96, which acts as the Electrophile. Catalysis depends on glutamate 168, which acts as the Proton acceptor. Residues glycine 174, serine 214, and 235 to 236 contribute to the substrate site; that span reads GG.

This sequence belongs to the triosephosphate isomerase family. In terms of assembly, homodimer.

The protein localises to the cytoplasm. The enzyme catalyses D-glyceraldehyde 3-phosphate = dihydroxyacetone phosphate. The protein operates within carbohydrate biosynthesis; gluconeogenesis. It participates in carbohydrate degradation; glycolysis; D-glyceraldehyde 3-phosphate from glycerone phosphate: step 1/1. Functionally, involved in the gluconeogenesis. Catalyzes stereospecifically the conversion of dihydroxyacetone phosphate (DHAP) to D-glyceraldehyde-3-phosphate (G3P). This chain is Triosephosphate isomerase, found in Streptococcus gordonii (strain Challis / ATCC 35105 / BCRC 15272 / CH1 / DL1 / V288).